The chain runs to 537 residues: Organic anion transporter 3 (537 aa).

Over 1–11 (MTFSEILDRVG) the chain is Cytoplasmic. A Phosphoserine modification is found at S4. The helical transmembrane segment at 12–32 (SMGPFQYLHVTLLALPILGIA) threads the bilayer. The Extracellular segment spans residues 33–123 (NHNLLQIFTA…LVCGSNKLKE (91 aa)). N81 carries N-linked (GlcNAc...) asparagine glycosylation. Residues 124–144 (MAQSVFMAGILVGGPVFGELS) traverse the membrane as a helical segment. The Cytoplasmic portion of the chain corresponds to 145-150 (DRFGRK). The helical transmembrane segment at 151 to 171 (PILTWSYLLLAASGSSAAFSP) threads the bilayer. The Extracellular segment spans residues 172–176 (SLTVY). Residues 177–197 (MIFRFLCGCSISGISLSTIIL) traverse the membrane as a helical segment. Residues 198–212 (NVEWVPTSTRAISST) are Cytoplasmic-facing. A helical membrane pass occupies residues 213–233 (TIGYCYTIGQFILPGLAYAVP). Topologically, residues 234 to 236 (QWR) are extracellular. The chain crosses the membrane as a helical span at residues 237–257 (WLQLSVSAAFFIFSLLSWWVP). Residues 258 to 327 (ESIRWLVLSG…FRVSILRRVT (70 aa)) lie on the Cytoplasmic side of the membrane. The helical transmembrane segment at 328 to 348 (FCLSLAWFATGFAYYSLAMGV) threads the bilayer. Residues 349–354 (EEFGVN) lie on the Extracellular side of the membrane. A helical membrane pass occupies residues 355-375 (IYILQIIFGGVDIPAKFITIL). The Cytoplasmic portion of the chain corresponds to 376–383 (SISYLGRR). A helical membrane pass occupies residues 384–404 (ITQGFLLILAGVAILALIFVS). At 405-411 (SEMQLLR) the chain is on the extracellular side. The chain crosses the membrane as a helical span at residues 412–432 (TALAVFGKGCLSGSFSCLFLY). The Cytoplasmic portion of the chain corresponds to 433-471 (TSELYPTVLRQTGMGISNIWARVGSMIAPLVKITGELQP). A helical transmembrane segment spans residues 472–492 (FIPNVIFGTMTLLGGSAAFFL). The Extracellular segment spans residues 493 to 537 (LETLNRPLPETIEDIQDWYQQTKKTKQEPEAEKASQTIPLKTGGP). Residues 513-537 (QTKKTKQEPEAEKASQTIPLKTGGP) form a disordered region.

It belongs to the major facilitator (TC 2.A.1) superfamily. Organic cation transporter (TC 2.A.1.19) family. As to expression, expressed mainly in kidney. In kidney, detected in almost all parts of the nephron, including macula densa cells. Expressed (at protein level) throughout the renal cortex. Widely distributed in the brain with no large regional differences. Expressed in the choroid plexus (CP, located in the ventricles of the brain). Expressed in developing bone. Weakly expressed in brain and eye.

It localises to the basolateral cell membrane. It carries out the reaction estrone 3-sulfate(out) + glutarate(in) = estrone 3-sulfate(in) + glutarate(out). It catalyses the reaction estrone 3-sulfate(in) + 2-oxoglutarate(out) = estrone 3-sulfate(out) + 2-oxoglutarate(in). The enzyme catalyses taurocholate(out) + glutarate(in) = taurocholate(in) + glutarate(out). The catalysed reaction is dehydroepiandrosterone 3-sulfate(out) + glutarate(in) = dehydroepiandrosterone 3-sulfate(in) + glutarate(out). It carries out the reaction glutarate(in) + 2-oxoglutarate(out) = glutarate(out) + 2-oxoglutarate(in). It catalyses the reaction urate(in) + 2-oxoglutarate(out) = urate(out) + 2-oxoglutarate(in). The enzyme catalyses prostaglandin F2alpha(out) + glutarate(in) = prostaglandin F2alpha(in) + glutarate(out). The catalysed reaction is prostaglandin F2alpha(out) + 2-oxoglutarate(in) = prostaglandin F2alpha(in) + 2-oxoglutarate(out). It carries out the reaction (R)-carnitine(out) + 2-oxoglutarate(in) = (R)-carnitine(in) + 2-oxoglutarate(out). It catalyses the reaction glutarate(in) + (R)-carnitine(out) = glutarate(out) + (R)-carnitine(in). The enzyme catalyses prostaglandin E2(out) + 2-oxoglutarate(in) = prostaglandin E2(in) + 2-oxoglutarate(out). The catalysed reaction is prostaglandin E2(out) + glutarate(in) = prostaglandin E2(in) + glutarate(out). It carries out the reaction urate(in) + glutarate(out) = urate(out) + glutarate(in). It catalyses the reaction taurocholate(out) + 2-oxoglutarate(in) = taurocholate(in) + 2-oxoglutarate(out). The enzyme catalyses dehydroepiandrosterone 3-sulfate(out) + 2-oxoglutarate(in) = dehydroepiandrosterone 3-sulfate(in) + 2-oxoglutarate(out). The catalysed reaction is kynurenate(out) + a dicarboxylate(in) = kynurenate(in) + a dicarboxylate(out). It carries out the reaction (indol-3-yl)acetate(out) + a dicarboxylate(in) = (indol-3-yl)acetate(in) + a dicarboxylate(out). It catalyses the reaction indoxyl sulfate(out) + a dicarboxylate(in) = indoxyl sulfate(in) + a dicarboxylate(out). The enzyme catalyses N-benzoylglycine(out) + a dicarboxylate(in) = N-benzoylglycine(in) + a dicarboxylate(out). The catalysed reaction is 3-carboxy-4-methyl-5-propyl-2-furanpropanoate(out) + a dicarboxylate(in) = 3-carboxy-4-methyl-5-propyl-2-furanpropanoate(in) + a dicarboxylate(out). It carries out the reaction (6R)-L-erythro-5,6,7,8-tetrahydrobiopterin(out) + a dicarboxylate(in) = (6R)-L-erythro-5,6,7,8-tetrahydrobiopterin(in) + a dicarboxylate(out). It catalyses the reaction L-erythro-7,8-dihydrobiopterin(out) + a dicarboxylate(in) = L-erythro-7,8-dihydrobiopterin(in) + a dicarboxylate(out). The enzyme catalyses L-sepiapterin(out) + a dicarboxylate(in) = L-sepiapterin(in) + a dicarboxylate(out). With respect to regulation, expression inhibited by androgens such as testosterone. Functionally, functions as an organic anion/dicarboxylate exchanger that couples organic anion uptake indirectly to the sodium gradient. Transports organic anions such as estrone 3-sulfate (E1S) and urate in exchange for dicarboxylates such as glutarate or ketoglutarate (2-oxoglutarate). Plays an important role in the excretion of endogenous and exogenous organic anions, especially from the kidney and the brain. E1S transport is pH- and chloride-dependent and may also involve E1S/cGMP exchange. Responsible for the transport of prostaglandin E2 (PGE2) and prostaglandin F2(alpha) (PGF2(alpha)) in the basolateral side of the renal tubule. Involved in the transport of neuroactive tryptophan metabolites kynurenate and xanthurenate. Functions as a biopterin transporters involved in the uptake and the secretion of coenzymes tetrahydrobiopterin (BH4), dihydrobiopterin (BH2) and sepiapterin to urine, thereby determining baseline levels of blood biopterins. May be involved in the basolateral transport of steviol, a metabolite of the popular sugar substitute stevioside. May participate in the detoxification/ renal excretion of drugs and xenobiotics, such as the histamine H(2)-receptor antagonists fexofenadine and cimetidine, the antibiotic benzylpenicillin (PCG), the anionic herbicide 2,4-dichloro-phenoxyacetate (2,4-D), the diagnostic agent p-aminohippurate (PAH), the antiviral acyclovir (ACV), and the mycotoxin ochratoxin (OTA), by transporting these exogenous organic anions across the cell membrane in exchange for dicarboxylates such as 2-oxoglutarate. May contribute to the release of cortisol in the adrenals. Involved in one of the detoxification systems on the choroid plexus (CP), removes substrates such as E1S or taurocholate (TC), PCG, 2,4-D and PAH, from the cerebrospinal fluid (CSF) to the blood for eventual excretion in urine and bile. Also contributes to the uptake of several other organic compounds such as the prostanoids prostaglandin E(2) and prostaglandin F(2-alpha), L-carnitine, and the therapeutic drugs allopurinol, 6-mercaptopurine (6-MP) and 5-fluorouracil (5-FU). Mediates the transport of PAH, PCG, and the statins pravastatin and pitavastatin, from the cerebrum into the blood circulation across the blood-brain barrier (BBB). Contributes to the renal uptake of potent uremic toxins (indoxyl sulfate (IS), indole acetate (IA), hippurate/N-benzoylglycine (HA) and 3-carboxy-4-methyl-5-propyl-2-furanpropionate (CMPF)), pravastatin, PCG, E1S and dehydroepiandrosterone sulfate (DHEAS), and is partly involved in the renal uptake of temocaprilat (an angiotensin-converting enzyme (ACE) inhibitor). In summary, plays a role in the efflux of drugs and xenobiotics, helping reduce their undesired toxicological effects on the body. The protein is Organic anion transporter 3 (Slc22a8) of Mus musculus (Mouse).